A 129-amino-acid polypeptide reads, in one-letter code: M-zodatoxin-Lt8e (129 aa).

An N-terminal signal peptide occupies residues 1–20 (MKYFVVALALVAAFVCIAES). The propeptide occupies 21–60 (KPAESEHELAEVEEENELADLEDAVWLEHLADLSDLEEAR). The short motif at 57–60 (EEAR) is the Processing quadruplet motif element.

Post-translationally, cleavage of the propeptide depends on the processing quadruplet motif (XXXR, with at least one of X being E). In terms of tissue distribution, expressed by the venom gland.

It localises to the secreted. In terms of biological role, insecticidal, cytolytic and antimicrobial peptide. Forms voltage-dependent, ion-permeable channels in membranes. At high concentration causes cell membrane lysis. This is M-zodatoxin-Lt8e (cit 1-5) from Lachesana tarabaevi (Spider).